Here is a 217-residue protein sequence, read N- to C-terminus: Adenylate kinase (217 aa).

10–15 is an ATP binding site; it reads GIGKGT. The tract at residues 30–59 is NMP; that stretch reads ATGDIFRKNFKENTELGILIKKIIAQGLLV. AMP is bound by residues Thr-31, Arg-36, 57 to 59, 85 to 88, and Gln-92; these read LLV and GFPR. An LID region spans residues 126–163; that stretch reads GRRICPECGKVYHIENIPPKTPGICDKDQKTLIQREDD. ATP is bound at residue Arg-127. Residues Cys-130 and Cys-133 each contribute to the Zn(2+) site. Position 136-137 (136-137) interacts with ATP; the sequence is VY. 2 residues coordinate Zn(2+): Cys-150 and Asp-153. Positions 160 and 171 each coordinate AMP. Gln-199 serves as a coordination point for ATP.

It belongs to the adenylate kinase family. In terms of assembly, monomer.

Its subcellular location is the cytoplasm. It carries out the reaction AMP + ATP = 2 ADP. It participates in purine metabolism; AMP biosynthesis via salvage pathway; AMP from ADP: step 1/1. In terms of biological role, catalyzes the reversible transfer of the terminal phosphate group between ATP and AMP. Plays an important role in cellular energy homeostasis and in adenine nucleotide metabolism. This chain is Adenylate kinase, found in Onion yellows phytoplasma (strain OY-M).